The sequence spans 460 residues: Cysteine--tRNA ligase (460 aa).

C29 is a binding site for Zn(2+). The short motif at 31–41 (MTIYDLCHIGH) is the 'HIGH' region element. Residues C213, H238, and E242 each contribute to the Zn(2+) site. A 'KMSKS' region motif is present at residues 270–274 (KMSKS). An ATP-binding site is contributed by K273.

This sequence belongs to the class-I aminoacyl-tRNA synthetase family. Monomer. It depends on Zn(2+) as a cofactor.

The protein localises to the cytoplasm. The enzyme catalyses tRNA(Cys) + L-cysteine + ATP = L-cysteinyl-tRNA(Cys) + AMP + diphosphate. This is Cysteine--tRNA ligase from Verminephrobacter eiseniae (strain EF01-2).